Consider the following 936-residue polypeptide: Pre-rRNA-processing protein FHL1 (936 aa).

2 disordered regions span residues 1 to 90 (MDGE…NGNL) and 139 to 169 (DHSREVSSKEDINIEPVNPDEDEREKTQDNT). The segment covering 9 to 29 (ESSNHVGTSSPTTETQFTIDS) has biased composition (polar residues). Ser44 is modified (phosphoserine). Over residues 139–150 (DHSREVSSKEDI) the composition is skewed to basic and acidic residues. A Phosphoserine modification is found at Ser228. Phosphothreonine is present on residues Thr230 and Thr247. Positions 243–257 (PPQNTVTENNSTDAE) are enriched in polar residues. Positions 243–270 (PPQNTVTENNSTDAETTQRKLSEPIDAS) are disordered. Ser264 carries the phosphoserine modification. The FHA domain occupies 300-357 (AIIGRRSENDFSHKVDVNLGPSKSISRRHAQIFYNFGTGRFELSIIGKNGAFVDDIFV). Residues 384–395 (EQERNDDSKSPE) are compositionally biased toward basic and acidic residues. A disordered region spans residues 384–442 (EQERNDDSKSPENADIAESEINTRNLKKNEPKSKKKITTGAKPKKAQTKPAVKKEKKPP). A compositionally biased stretch (basic residues) spans 416-430 (SKKKITTGAKPKKAQ). Positions 460-552 (TKPTVSYSAM…ERQKKKQSEI (93 aa)) form a DNA-binding region, fork-head. The tract at residues 718–936 (AKAQHSKPIR…EVNVSLEEKL (219 aa)) is disordered. 2 stretches are compositionally biased toward polar residues: residues 742–753 (SQLSASASSHPN) and 765–777 (DPSSLSRFFQPRQ). Composition is skewed to low complexity over residues 779–795 (ARATSSVAATSVPAAAS) and 815–853 (ESGTSSSSSSSSESGSESDSGSDDGSASGSGDNSSTSSE). Acidic residues predominate over residues 854–863 (SESESDSGSE). Over residues 864 to 911 (VDEKNNKNEKIDSESIKNNESKDDIPSKDENSSNDNREISKTDEEGHD) the composition is skewed to basic and acidic residues.

It localises to the nucleus. Its function is as follows. Acts as a transcriptional regulator that recruits coactivator IFH1 to the promoters of ribosomal protein genes. Recruited to ribosomal gene promoters by RAP1. The protein is Pre-rRNA-processing protein FHL1 (FHL1) of Saccharomyces cerevisiae (strain ATCC 204508 / S288c) (Baker's yeast).